A 237-amino-acid polypeptide reads, in one-letter code: Ribosomal RNA small subunit methyltransferase G (237 aa).

S-adenosyl-L-methionine-binding positions include G78, F83, 129–130, and R148; that span reads AE.

Belongs to the methyltransferase superfamily. RNA methyltransferase RsmG family.

Its subcellular location is the cytoplasm. Its function is as follows. Specifically methylates the N7 position of a guanine in 16S rRNA. This chain is Ribosomal RNA small subunit methyltransferase G, found in Streptococcus pyogenes serotype M2 (strain MGAS10270).